Reading from the N-terminus, the 201-residue chain is Ras-related protein Rab-1B (201 aa).

Position 1 is an N-acetylmethionine (methionine 1). 13 residues coordinate GTP: serine 17, glycine 18, valine 19, glycine 20, lysine 21, serine 22, cysteine 23, tyrosine 33, threonine 34, glutamate 35, serine 36, serine 39, and threonine 40. Serine 22 provides a ligand contact to Mg(2+). Residues 30 to 45 (DDTYTESYISTIGVDF) carry the Switch 1 motif. 2 residues coordinate Mg(2+): threonine 40 and aspartate 63. The switch 2 region; required for interaction with REP1/CHM stretch occupies residues 64-83 (TAGQERGRTITSSYYRGAHG). Residues 65–80 (AGQERGRTITSSYYRG) carry the Switch 2 motif. 7 residues coordinate GTP: glycine 66, asparagine 121, lysine 122, aspartate 124, serine 151, alanine 152, and lysine 153. The segment at 173–201 (MGPGAASGGERPNLKIDSTPVKQAGGGCC) is disordered. S-geranylgeranyl cysteine attachment occurs at residues cysteine 200 and cysteine 201. A Cysteine methyl ester modification is found at cysteine 201.

The protein belongs to the small GTPase superfamily. Rab family. In terms of assembly, interacts with MICAL1 and MICAL2. Interacts (in GTP-bound form) with MICALCL, MICAL1 and MILCAL3. Interacts with GDI1; the interaction requires the GDP-bound state. Interacts with CHM/REP1; the interaction requires the GDP-bound form and is necessary for prenylation by GGTase II. Interacts with RabGAP TBC1D20. Interacts (in GDP-bound form) with lipid phosphatase MTMR6 (via GRAM domain); the interaction regulates MTMR6 recruitment to the endoplasmic reticulum-Golgi intermediate compartment. Interacts (in GDP-bound form) with lipid phosphatase MTMR7. Requires Mg(2+) as cofactor. Post-translationally, prenylated; by GGTase II, only after interaction of the substrate with Rab escort protein 1 (REP1).

The protein localises to the cytoplasm. It is found in the membrane. Its subcellular location is the preautophagosomal structure membrane. The protein resides in the perinuclear region. The enzyme catalyses GTP + H2O = GDP + phosphate + H(+). Its activity is regulated as follows. Regulated by guanine nucleotide exchange factors (GEFs) which promote the exchange of bound GDP for free GTP. Regulated by GTPase activating proteins (GAPs) including TBC1D20 which increases the GTP hydrolysis activity. Inhibited by GDP dissociation inhibitors (GDIs). The small GTPases Rab are key regulators of intracellular membrane trafficking, from the formation of transport vesicles to their fusion with membranes. Rabs cycle between an inactive GDP-bound form and an active GTP-bound form that is able to recruit to membranes different set of downstream effectors directly responsible for vesicle formation, movement, tethering and fusion. Plays a role in the initial events of the autophagic vacuole development which take place at specialized regions of the endoplasmic reticulum. Regulates vesicular transport between the endoplasmic reticulum and successive Golgi compartments. Required to modulate the compacted morphology of the Golgi. Promotes the recruitment of lipid phosphatase MTMR6 to the endoplasmic reticulum-Golgi intermediate compartment. The protein is Ras-related protein Rab-1B (RAB1B) of Sus scrofa (Pig).